The chain runs to 338 residues: Glycerol-3-phosphate dehydrogenase [NAD(P)+] (338 aa).

Residues Ser-14, Tyr-15, His-35, and Lys-109 each coordinate NADPH. Sn-glycerol 3-phosphate-binding residues include Lys-109, Gly-138, and Thr-140. Ala-142 contributes to the NADPH binding site. Sn-glycerol 3-phosphate-binding residues include Lys-194, Asp-247, Ser-257, Arg-258, and Asn-259. The active-site Proton acceptor is the Lys-194. Arg-258 serves as a coordination point for NADPH. NADPH is bound by residues Val-282 and Glu-284.

It belongs to the NAD-dependent glycerol-3-phosphate dehydrogenase family.

The protein localises to the cytoplasm. It carries out the reaction sn-glycerol 3-phosphate + NAD(+) = dihydroxyacetone phosphate + NADH + H(+). It catalyses the reaction sn-glycerol 3-phosphate + NADP(+) = dihydroxyacetone phosphate + NADPH + H(+). It functions in the pathway membrane lipid metabolism; glycerophospholipid metabolism. In terms of biological role, catalyzes the reduction of the glycolytic intermediate dihydroxyacetone phosphate (DHAP) to sn-glycerol 3-phosphate (G3P), the key precursor for phospholipid synthesis. The sequence is that of Glycerol-3-phosphate dehydrogenase [NAD(P)+] from Shewanella baltica (strain OS155 / ATCC BAA-1091).